We begin with the raw amino-acid sequence, 188 residues long: VQ motif-containing protein 18 (188 aa).

3 disordered regions span residues 1-20, 58-92, and 157-188; these read MEIT…VSMN, LTGK…HQPV, and GFIF…HNSS. The VQ signature appears at 51–60; it reads FRSLVQSLTG. The span at 161–179 shows a compositional bias: low complexity; it reads NNNNNNNNNNNNNNNNNTN.

The protein resides in the nucleus. May function as positive regulator of plant growth. This Arabidopsis thaliana (Mouse-ear cress) protein is VQ motif-containing protein 18.